The chain runs to 623 residues: C2H2-type transcription factor zfpA (623 aa).

Residues glycine 202–valine 219 show a composition bias toward polar residues. 2 disordered regions span residues glycine 202–arginine 256 and serine 468–alanine 493. Residues serine 227–serine 239 are compositionally biased toward low complexity. A C2H2-type zinc finger spans residues glycine 255–histidine 276.

It is found in the nucleus. Transcription factor involved in fungal growth and virulence potential. Negatively regulates antifungal drug susceptibility via transcriptional inhibition of the expressions of drug efflux pumps in a crzA-dependent way. Under the treatment of azoles, both zfpA and crzA transfer to nuclei and coregulate the expression of multidrug transporters and then keep normal drug susceptibility in fungal cells. In Aspergillus fumigatus (strain CBS 144.89 / FGSC A1163 / CEA10) (Neosartorya fumigata), this protein is C2H2-type transcription factor zfpA.